We begin with the raw amino-acid sequence, 226 residues long: Putative N-acetylmannosamine-6-phosphate 2-epimerase (226 aa).

Belongs to the NanE family.

The enzyme catalyses an N-acyl-D-glucosamine 6-phosphate = an N-acyl-D-mannosamine 6-phosphate. Its pathway is amino-sugar metabolism; N-acetylneuraminate degradation; D-fructose 6-phosphate from N-acetylneuraminate: step 3/5. Converts N-acetylmannosamine-6-phosphate (ManNAc-6-P) to N-acetylglucosamine-6-phosphate (GlcNAc-6-P). This chain is Putative N-acetylmannosamine-6-phosphate 2-epimerase, found in Mycoplasma mycoides subsp. mycoides SC (strain CCUG 32753 / NCTC 10114 / PG1).